Here is a 356-residue protein sequence, read N- to C-terminus: Staphylococcal superantigen-like 3 (356 aa).

Residues 1–30 (MKMRTIAKTSLALGLLTTGAITVTTQSVKA) form the signal peptide. Residues 61 to 165 (ATTQAANTRQ…TIKQAQTDMT (105 aa)) form a disordered region. Residues 69 to 104 (RQERTPKLEKAPNTNEEKTSASKIEKISQPKQEEQK) show a composition bias toward basic and acidic residues. Over residues 114-141 (PKQEQSQTTTESTTPKTKVTTPPSTNTP) the composition is skewed to low complexity. The segment covering 142-164 (QPMQSTKSDTPQSPTIKQAQTDM) has biased composition (polar residues). Residues 228-326 (IDVFIVLEDN…VIKMKNGGKY (99 aa)) form a sialyl Lewis X-binding region.

It belongs to the staphylococcal/streptococcal toxin family. In terms of assembly, interacts with host TLR2 (via its extracellular domain).

It localises to the secreted. In terms of biological role, secreted protein that plays an essential role in immune innate response inhibition by interacting with and inhibiting host TLR2. In turn, bacteria recognition by immune cells is impaired and cytokine production is inhibited. Mechanistically, by interacting with TLR2, blocks ligand binding and thus inhibits activation. Second, by interacting with an already formed TLR2-lipopeptide complex, prevents TLR heterodimerization and downstream signaling. The interaction with host TLR2 does not involve sialyl Lewis X interactions. This Staphylococcus aureus (strain NCTC 8325 / PS 47) protein is Staphylococcal superantigen-like 3.